A 564-amino-acid polypeptide reads, in one-letter code: MPEADIKPRSRDVTDGLEKAAARGMLRAVGMVDEDFAKAQIGVASSWNEITPCNLSLDRLAKSVKEGVFAAGGYPLEFGTISVSDGISMGHEGMHFSLVSREVIADSVETVMQAERLDGSVLLAGCDKSLPGMLMAAARLDLASVFLYAGSILPGVAKLSDGSEREVTIIDAFEAVGACSRGLMSRADVDAIERAICPGEGACGGMYTANTMASAAEALGMSLPGSAAPPATDRRRDGFARQSGQAVIELLRQGITARDIMTREAFENAIAVVMAFGGSTNAVLHLLAIAHEANVELTLDDFSRIGSKVPHLADVKPFGRHVMSHVDHIGGVPVVMKTLLDAGLLHGDCLTVTGRTVAENLEAIAPPDPDGKVLRALINPIHATGGITILRGSLAPEGAVVKTAGLDTDVFEGTARVFDGERAALDALEDGTITHGDVVVIRYEGPKGGPGMREMLAITGAIKGAGLGKDVLLLTDGRFSGGTTGFCVGHIAPEAVDAGPIAFVRDGDRIRLDVAGRTLDVLTDPPEFAARQQNFTPPAPRYKTGVLAKYVKLVGSAAIGAVCG.

Cysteine 53 lines the [2Fe-2S] cluster pocket. Mg(2+) is bound at residue aspartate 85. Residue cysteine 126 coordinates [2Fe-2S] cluster. Mg(2+) is bound by residues aspartate 127 and lysine 128. Lysine 128 is modified (N6-carboxylysine). Cysteine 203 contacts [2Fe-2S] cluster. Position 454 (glutamate 454) interacts with Mg(2+). The Proton acceptor role is filled by serine 480.

The protein belongs to the IlvD/Edd family. As to quaternary structure, homodimer. Requires [2Fe-2S] cluster as cofactor. Mg(2+) is required as a cofactor.

It carries out the reaction (2R)-2,3-dihydroxy-3-methylbutanoate = 3-methyl-2-oxobutanoate + H2O. The enzyme catalyses (2R,3R)-2,3-dihydroxy-3-methylpentanoate = (S)-3-methyl-2-oxopentanoate + H2O. It participates in amino-acid biosynthesis; L-isoleucine biosynthesis; L-isoleucine from 2-oxobutanoate: step 3/4. The protein operates within amino-acid biosynthesis; L-valine biosynthesis; L-valine from pyruvate: step 3/4. Functionally, functions in the biosynthesis of branched-chain amino acids. Catalyzes the dehydration of (2R,3R)-2,3-dihydroxy-3-methylpentanoate (2,3-dihydroxy-3-methylvalerate) into 2-oxo-3-methylpentanoate (2-oxo-3-methylvalerate) and of (2R)-2,3-dihydroxy-3-methylbutanoate (2,3-dihydroxyisovalerate) into 2-oxo-3-methylbutanoate (2-oxoisovalerate), the penultimate precursor to L-isoleucine and L-valine, respectively. In Mycobacterium ulcerans (strain Agy99), this protein is Dihydroxy-acid dehydratase.